Here is a 210-residue protein sequence, read N- to C-terminus: Chaperone protein TorD (210 aa).

The protein belongs to the TorD/DmsD family. TorD subfamily.

Its subcellular location is the cytoplasm. Involved in the biogenesis of TorA. Acts on TorA before the insertion of the molybdenum cofactor and, as a result, probably favors a conformation of the apoenzyme that is competent for acquiring the cofactor. The chain is Chaperone protein TorD from Salmonella agona (strain SL483).